The following is a 188-amino-acid chain: FMN-dependent NADPH-azoreductase (188 aa).

It belongs to the azoreductase type 2 family. As to quaternary structure, homotetramer. FMN serves as cofactor.

Catalyzes the reductive cleavage of azo bond in aromatic azo compounds to the corresponding amines. Requires NADPH, but not NADH, as an electron donor for its activity. The chain is FMN-dependent NADPH-azoreductase (azo1) from Staphylococcus saprophyticus subsp. saprophyticus (strain ATCC 15305 / DSM 20229 / NCIMB 8711 / NCTC 7292 / S-41).